The primary structure comprises 91 residues: Cell division topological specificity factor (91 aa).

This sequence belongs to the MinE family.

Its function is as follows. Prevents the cell division inhibition by proteins MinC and MinD at internal division sites while permitting inhibition at polar sites. This ensures cell division at the proper site by restricting the formation of a division septum at the midpoint of the long axis of the cell. The polypeptide is Cell division topological specificity factor (Gloeobacter violaceus (strain ATCC 29082 / PCC 7421)).